A 643-amino-acid polypeptide reads, in one-letter code: Phosphatidylinositol-3,5-bisphosphate 3-phosphatase MTMR2 (643 aa).

The disordered stretch occupies residues 1 to 52; the sequence is MEKSSSCESLGAQLPAARLPSEDSLSSASTSHSENSVHTKSASAISSDSIST. S6 and S9 each carry phosphoserine. Over residues 23-40 the composition is skewed to polar residues; that stretch reads DSLSSASTSHSENSVHTK. Residues 41–52 are compositionally biased toward low complexity; it reads SASAISSDSIST. S58 bears the Phosphoserine mark. The GRAM domain occupies 68–139; that stretch reads NKLAEMEEPA…GVISRVEKIG (72 aa). Residues 205 to 580 enclose the Myotubularin phosphatase domain; that stretch reads GWKLYDPLLE…RHLELWVGYY (376 aa). The a 1,2-diacyl-sn-glycero-3-phospho-(1D-myo-inositol-3,5-bisphosphate) site is built by N330, N355, and I356. N330, N355, and I356 together coordinate a 1,2-diacyl-sn-glycero-3-phospho-(1D-myo-inositol-3-phosphate). The active-site Phosphocysteine intermediate is the C417. S418, D419, G420, W421, D422, R423, R459, and R463 together coordinate a 1,2-diacyl-sn-glycero-3-phospho-(1D-myo-inositol-3,5-bisphosphate). The a 1,2-diacyl-sn-glycero-3-phospho-(1D-myo-inositol-3-phosphate) site is built by S418, D419, G420, W421, D422, and R423. Residue R463 participates in a 1,2-diacyl-sn-glycero-3-phospho-(1D-myo-inositol-3-phosphate) binding. The stretch at 593–627 forms a coiled coil; that stretch reads IHSRYKELLAKRAELQRKVEELQREISNRSTSSSE. Residues 614–643 are disordered; it reads LQREISNRSTSSSERASSPAQCVTPVQTVV. Over residues 620-631 the composition is skewed to low complexity; it reads NRSTSSSERASS. Residues 632-643 show a composition bias toward polar residues; sequence PAQCVTPVQTVV.

The protein belongs to the protein-tyrosine phosphatase family. Non-receptor class myotubularin subfamily. In terms of assembly, homodimer (via coiled-coil domain). Heterotetramer consisting of one MTMR2 dimer and one SBF2/MTMR13 dimer; specifically in peripheral nerves stabilizes SBF2/MTMR13 at the membranes and increases MTMR2 catalytic activity towards phosphatidylinositol 3,5-bisphosphate and to a lesser extent towards phosphatidylinositol 3-phosphate. Heterodimer with SBF1/MTMR5; acts as an adapter for the phosphatase MTMR2 to regulate MTMR2 catalytic activity and subcellular location. Heterodimer with MTMR12. In terms of processing, phosphorylation at Ser-58 decreases MTMR2 localization to endocytic vesicular structures. Expressed in sciatic nerve and in Schwann cells (at protein level). Detected in adult dorsal root ganglia, neurons of the central nervous system, motor neurons, cell soma and neurites of sensory neurons, olfactory bulb, cerebellum and hippocampus.

Its subcellular location is the cytoplasm. The protein resides in the early endosome membrane. It localises to the perinuclear region. The protein localises to the cell projection. It is found in the axon. Its subcellular location is the endosome membrane. It catalyses the reaction a 1,2-diacyl-sn-glycero-3-phospho-(1D-myo-inositol-3,5-bisphosphate) + H2O = a 1,2-diacyl-sn-glycero-3-phospho-(1D-myo-inositol-5-phosphate) + phosphate. It carries out the reaction a 1,2-diacyl-sn-glycero-3-phospho-(1D-myo-inositol-3-phosphate) + H2O = a 1,2-diacyl-sn-glycero-3-phospho-(1D-myo-inositol) + phosphate. The catalysed reaction is 1,2-dioctanoyl-sn-glycero-3-phospho-(1-D-myo-inositol-3-phosphate) + H2O = 1,2-dioctanoyl-sn-glycero-3-phospho-(1D-myo-inositol) + phosphate. The enzyme catalyses 1,2-dioctanoyl-sn-glycero-3-phospho-(1D-myo-inositol-3,5-bisphosphate) + H2O = 1,2-dioctanoyl-sn-glycero-3-phospho-(1D-myo-inositol-5-phosphate) + phosphate. Lipid phosphatase that specifically dephosphorylates the D-3 position of phosphatidylinositol 3-phosphate and phosphatidylinositol 3,5-bisphosphate, generating phosphatidylinositol and phosphatidylinositol 5-phosphate. Regulates the level of these phosphoinositides critical for various biological processes including autophagy initiation and autophagosome maturation. This Mus musculus (Mouse) protein is Phosphatidylinositol-3,5-bisphosphate 3-phosphatase MTMR2.